The following is a 244-amino-acid chain: 14-3-3 protein beta/alpha-B (244 aa).

Met1 is modified (N-acetylmethionine).

Belongs to the 14-3-3 family. Homodimer, and heterodimer with other family members.

It localises to the cytoplasm. In terms of biological role, adapter protein implicated in the regulation of a large spectrum of both general and specialized signaling pathways. Binds to a large number of partners, usually by recognition of a phosphoserine or phosphothreonine motif. Binding generally results in the modulation of the activity of the binding partner. In Xenopus laevis (African clawed frog), this protein is 14-3-3 protein beta/alpha-B (ywhab-b).